Reading from the N-terminus, the 702-residue chain is Protein sepa-1 (702 aa).

The required for self-association and interaction with pgl-3 stretch occupies residues 39–160 (RQRFCYEKTD…KESTSYGQFR (122 aa)). 3 consecutive short sequence motifs (LIR) follow at residues 107 to 110 (FVEV), 247 to 250 (FQKI), and 298 to 301 (FGFV). Residues 450 to 471 (AKDPEEPTTAASEGGNTYGYQE) form a disordered region. Positions 458 to 468 (TAASEGGNTYG) are enriched in polar residues. The short motif at 469–472 (YQEL) is the LIR 4 element. The stretch at 508 to 543 (AAMDKKKKRRELKSRLNKINAQIDELEKRRMERAGK) forms a coiled coil. A disordered region spans residues 545–564 (QVVSSSVPSEEAAQVEAPAS). The region spanning 597-674 (NTSKEWIVED…TVDQILKKTL (78 aa)) is the KIX domain. Residues 675 to 685 (KKDQRATEHNH) are compositionally biased toward basic and acidic residues. A disordered region spans residues 675-702 (KKDQRATEHNHQQPTQSSDELAKNHEKN).

Self-associates. Interacts (via the LIR motifs) with lgg-1; the interaction is direct. Interacts (via the LIR motifs) with lgg-2; the interaction is direct. Interacts with pgl-3; interaction is enhanced in the presence of RNA. Interacts with epg-2; may be modulated by prmt-1. Post-translationally, degraded by autophagy.

The protein localises to the nucleus. Its subcellular location is the cytoplasm. It localises to the cytoplasmic granule. Functionally, adapter protein that connects P-granules in somatic cells with the autophagic machinery. Association with other adapters such as epg-2 and P-granule components such as pgl-3 is required for the accumulation and degradation of P-granules by autophagy in somatic cells. This ensures exclusive localization of the P-granules in germ cells. This is Protein sepa-1 from Caenorhabditis elegans.